Consider the following 534-residue polypeptide: Nuclear polyadenylated RNA-binding protein 4 (534 aa).

A disordered region spans residues 1–154; it reads MSSDEEDFND…TKEERSKADL (154 aa). Residues Ser2 and Ser3 each carry the phosphoserine modification. Over residues 13-30 the composition is skewed to basic and acidic residues; it reads GDDKPTTTEEVKKEEEQN. The segment covering 37–78 has biased composition (low complexity); sequence SQLDQLAALQALSSSLNKLNNPNSNNSSSNNSNQDTSSSKQD. Phosphoserine occurs at positions 51 and 87. The span at 81–98 shows a compositional bias: basic and acidic residues; sequence ANDKEGSNEDTKNEKKQE. Low complexity-rich tracts occupy residues 99 to 112 and 121 to 144; these read SATS…ASSA and QLQQ…QVTQ. Residues 145–154 are compositionally biased toward basic and acidic residues; sequence TKEERSKADL. RRM domains are found at residues 159-241 and 243-320; these read CKMF…EQDK and GKIF…RAEP. Ser206 is modified (phosphoserine). Disordered regions lie at residues 316-354 and 415-534; these read KRAE…DFNQ and MPPN…PYNR. A compositionally biased stretch (low complexity) spans 336 to 354; that stretch reads GNNMNRRGGNFGNQGDFNQ. Residues 420–459 are compositionally biased toward polar residues; it reads MTLNQPQQDSNATQGSPAPSDSDNNKSNDVQTIGNTSNTD. Residue Thr458 is modified to Phosphothreonine. Phosphoserine occurs at positions 460 and 462. A compositionally biased stretch (low complexity) spans 460-475; that stretch reads SGSPPLNLPNGPKGPS. The segment covering 478 to 505 has biased composition (basic and acidic residues); sequence NDDHNSGYGYNRDRGDRDRNDRDRDYNH. At Arg519 the chain carries Omega-N-methylarginine. Residues 523 to 534 show a composition bias toward low complexity; that stretch reads NRRNNGYHPYNR.

As to quaternary structure, interacts with NAM7. Methylated by HMT1. The methylation is required for nuclear export.

It localises to the cytoplasm. The protein resides in the nucleus. It is found in the stress granule. Its function is as follows. RNA-binding protein, which is involved in the polyadenylation-dependent pre-mRNA 3'-end formation and cooperates with the cleavage factor CFIA complex and the cleavage and polyadenylation factor (CPF) complex. May be involved in regulation of poly(A) site selection. Is involved in nonsense-mediated mRNA decay. Seems to bind to an RNA downstream sequence element (DSE) located 3' of a nonsense codon and may mark the transcript for decay. The protein is Nuclear polyadenylated RNA-binding protein 4 of Saccharomyces cerevisiae (strain ATCC 204508 / S288c) (Baker's yeast).